The following is a 328-amino-acid chain: DNA repair protein RAD51 homolog 4 (328 aa).

Positions 1-83 are preferentially binds ssDNA; that stretch reads MGVLRVGLCP…ELKTSTAILS (83 aa). 107–114 contributes to the ATP binding site; it reads GGPGSGKT.

It belongs to the RecA family. RAD51 subfamily. In terms of assembly, part of the BCDX2 complex consisting of RAD51B, RAD51C, RAD51D and XRCC2; the complex has a ring-like structure arranged into a flat disc around a central channel. In the absence of DNA, the BCDX2 subcomplex XRCC2:RAD51D formed a multimeric ring structure; in the presence of single-stranded DNA it formed a filamentous structure with the ssDNA. Interacts with SWSAP1 and ZSWIM7; involved in homologous recombination repair. Interacts with BLM; required for stimulation of BLM activity by the BCDX2 subcomplex XRCC2:RAD51D. Expressed in colon, prostate, spleen, testis, ovary, thymus and small intestine. Weakly expressed in leukocytes.

Its subcellular location is the nucleus. The protein localises to the cytoplasm. The protein resides in the cytoskeleton. It localises to the microtubule organizing center. It is found in the centrosome. Its subcellular location is the chromosome. The protein localises to the telomere. Functionally, involved in the homologous recombination repair (HRR) pathway of double-stranded DNA breaks arising during DNA replication or induced by DNA-damaging agents. Bind to single-stranded DNA (ssDNA) and has DNA-dependent ATPase activity. Part of the RAD51 paralog protein complex BCDX2 which acts in the BRCA1-BRCA2-dependent HR pathway. Upon DNA damage, BCDX2 acts downstream of BRCA2 recruitment and upstream of RAD51 recruitment. BCDX2 binds predominantly to the intersection of the four duplex arms of the Holliday junction and to junction of replication forks. The BCDX2 complex was originally reported to bind single-stranded DNA, single-stranded gaps in duplex DNA and specifically to nicks in duplex DNA. Involved in telomere maintenance. The BCDX2 subcomplex XRCC2:RAD51D can stimulate Holliday junction resolution by BLM. The sequence is that of DNA repair protein RAD51 homolog 4 (RAD51D) from Homo sapiens (Human).